The sequence spans 331 residues: Adenosine deaminase (331 aa).

His12 and His14 together coordinate Zn(2+). His14, Asp16, and Gly170 together coordinate substrate. His197 serves as a coordination point for Zn(2+). The Proton donor role is filled by Glu200. Residue Asp278 coordinates Zn(2+).

Belongs to the metallo-dependent hydrolases superfamily. Adenosine and AMP deaminases family. Adenosine deaminase subfamily. Requires Zn(2+) as cofactor.

The enzyme catalyses adenosine + H2O + H(+) = inosine + NH4(+). The catalysed reaction is 2'-deoxyadenosine + H2O + H(+) = 2'-deoxyinosine + NH4(+). In terms of biological role, catalyzes the hydrolytic deamination of adenosine and 2-deoxyadenosine. The protein is Adenosine deaminase of Clostridium botulinum (strain 657 / Type Ba4).